The chain runs to 376 residues: Protein XRP2 (376 aa).

A disordered region spans residues 1 to 55; that stretch reads MGCFFSKKSRRKSPKKDAALPTGDESATGNDLAETNNTALGSNSNQEAPKQYSWD. G2 carries N-myristoyl glycine lipidation. C3 carries the S-palmitoyl cysteine lipid modification. Residues 25–48 are compositionally biased toward polar residues; sequence ESATGNDLAETNNTALGSNSNQEA. One can recognise a C-CAP/cofactor C-like domain in the interval 49 to 204; it reads PKQYSWDKRE…NWSNIHDFTP (156 aa). GTP is bound by residues 123 to 124 and 140 to 143; these read GS and QQFR.

Belongs to the TBCC family. Post-translationally, myristoylated on Gly-2; which may be required for membrane targeting. Palmitoylated on Cys-3; which may be required for plasma membrane targeting. In terms of tissue distribution, in the retina, detected in both rod and cone photoreceptors (at protein level). Has strongest expression in the retinal outer nuclear layer (ONL) and weaker expression in the outer plexiform layer (OPL) and inner plexiform layer (IPL) (at protein level). Expressed in all tissues tested.

Its subcellular location is the cell membrane. The protein resides in the cell projection. It localises to the cilium. Its function is as follows. Acts as a GTPase-activating protein (GAP) involved in trafficking between the Golgi and the ciliary membrane. Acts as a GTPase-activating protein (GAP) for tubulin in concert with tubulin-specific chaperone C, but does not enhance tubulin heterodimerization. In the retina, required for maintenance of rod and cone photoreceptor cells. May have a role in normal retinal localization of the transducins GNB1 and GNAT1, and the rhodopsin kinase GRK1. The chain is Protein XRP2 from Danio rerio (Zebrafish).